A 101-amino-acid chain; its full sequence is Small ribosomal subunit protein uS14 (101 aa).

Belongs to the universal ribosomal protein uS14 family. As to quaternary structure, part of the 30S ribosomal subunit. Contacts proteins S3 and S10.

Its function is as follows. Binds 16S rRNA, required for the assembly of 30S particles and may also be responsible for determining the conformation of the 16S rRNA at the A site. This chain is Small ribosomal subunit protein uS14, found in Leifsonia xyli subsp. xyli (strain CTCB07).